The primary structure comprises 1572 residues: E3 ubiquitin-protein ligase HECW2 (1572 aa).

Position 48 is a phosphoserine (Ser-48). Positions 167-301 constitute a C2 domain; that stretch reads GAEGMEGGAS…QAIGDQMLSY (135 aa). 2 disordered regions span residues 341 to 452 and 489 to 796; these read VNSV…SSFP and IMFS…PSVR. Positions 400–410 are enriched in low complexity; the sequence is TSTSSRTSPPR. Positions 518–532 are enriched in basic and acidic residues; it reads ASTHEAASFEDKPEN. Composition is skewed to polar residues over residues 572 to 588, 597 to 614, 643 to 664, and 688 to 703; these read EVDQ…SDAS, ETES…SSET, SSCN…SSLE, and PTSS…SVCT. Residues 737-1068 form an interaction with TP73 region; it reads WQRRGSLEGA…PRPSSTFNTV (332 aa). The span at 744 to 776 shows a compositional bias: low complexity; it reads EGAAAAAESPPQEEGSAGEAQGTCEGATAQEEG. The region spanning 807–840 is the WW 1 domain; sequence EALPPNWEARIDSHGRIFYVDHVNRTTTWQRPTA. Residues 847–874 adopt a coiled-coil conformation; that stretch reads LQRSNSIQQMEQLNRRYQSIRRTMTNER. 2 positions are modified to phosphoserine: Ser-852 and Ser-909. A WW 2 domain is found at 985-1018; sequence LELPRGWEMKHDHQGKAFFVDHNSRTTTFIDPRL. Disordered stretches follow at residues 1024–1069 and 1161–1187; these read RPTS…NTVS and CQSP…RAPA. Residues 1031–1040 are compositionally biased toward basic residues; the sequence is HRQHLTRQRS. Polar residues predominate over residues 1161–1181; sequence CQSPRGSPVSSPQNSPGTQRA. Residue Ser-1175 is modified to Phosphoserine. The region spanning 1237–1572 is the HECT domain; it reads SRKDLQRNKL…VEETSTFGLE (336 aa). Cys-1540 acts as the Glycyl thioester intermediate in catalysis.

As to quaternary structure, interacts with TP73. Interacts with FZR1. In terms of processing, ubiquitinated and degraded during mitotic exit by APC/C-Cdh1. As to expression, predominantly expressed in adult brain, lung and heart.

Its subcellular location is the cytoplasm. It localises to the cytoskeleton. The protein localises to the spindle. It catalyses the reaction S-ubiquitinyl-[E2 ubiquitin-conjugating enzyme]-L-cysteine + [acceptor protein]-L-lysine = [E2 ubiquitin-conjugating enzyme]-L-cysteine + N(6)-ubiquitinyl-[acceptor protein]-L-lysine.. It functions in the pathway protein modification; protein ubiquitination. Its function is as follows. E3 ubiquitin-protein ligase that mediates ubiquitination of TP73. Acts to stabilize TP73 and enhance activation of transcription by TP73. Involved in the regulation of mitotic metaphase/anaphase transition. In Homo sapiens (Human), this protein is E3 ubiquitin-protein ligase HECW2 (HECW2).